The sequence spans 306 residues: D-alanine--D-alanine ligase B (306 aa).

The 203-residue stretch at 101-303 folds into the ATP-grasp domain; the sequence is KLLWQGAGLP…FSQLVVRILE (203 aa). Residue 134–189 coordinates ATP; the sequence is ISALGLPVIVKPSREGSSVGMSKVVAENALQDALRLAFQHDEEVLIEKWLSGPEFT. Aspartate 257, glutamate 270, and asparagine 272 together coordinate Mg(2+).

Belongs to the D-alanine--D-alanine ligase family. Mg(2+) is required as a cofactor. Requires Mn(2+) as cofactor.

It is found in the cytoplasm. The catalysed reaction is 2 D-alanine + ATP = D-alanyl-D-alanine + ADP + phosphate + H(+). It functions in the pathway cell wall biogenesis; peptidoglycan biosynthesis. Its function is as follows. Cell wall formation. The sequence is that of D-alanine--D-alanine ligase B from Shigella flexneri.